A 347-amino-acid chain; its full sequence is Aspartate-semialdehyde dehydrogenase (347 aa).

NADP(+)-binding positions include 10–13 (TGMV) and 37–38 (RS). Position 108 (Arg108) interacts with phosphate. The active-site Acyl-thioester intermediate is Cys147. Gln174 is a substrate binding site. Residue 177–178 (SG) coordinates NADP(+). Glu200 serves as a coordination point for substrate. Lys203 is a binding site for phosphate. Arg233 serves as a coordination point for substrate. His240 functions as the Proton acceptor in the catalytic mechanism. The segment at 276–299 (APEKPVVVRDEENRPQPRMDRDMD) is disordered. Positions 281-299 (VVVRDEENRPQPRMDRDMD) are enriched in basic and acidic residues. Residue 327–328 (NT) participates in NADP(+) binding.

Belongs to the aspartate-semialdehyde dehydrogenase family. As to quaternary structure, homodimer.

The catalysed reaction is L-aspartate 4-semialdehyde + phosphate + NADP(+) = 4-phospho-L-aspartate + NADPH + H(+). It participates in amino-acid biosynthesis; L-lysine biosynthesis via DAP pathway; (S)-tetrahydrodipicolinate from L-aspartate: step 2/4. Its pathway is amino-acid biosynthesis; L-methionine biosynthesis via de novo pathway; L-homoserine from L-aspartate: step 2/3. It functions in the pathway amino-acid biosynthesis; L-threonine biosynthesis; L-threonine from L-aspartate: step 2/5. Functionally, catalyzes the NADPH-dependent formation of L-aspartate-semialdehyde (L-ASA) by the reductive dephosphorylation of L-aspartyl-4-phosphate. The chain is Aspartate-semialdehyde dehydrogenase from Methanothermobacter thermautotrophicus (strain ATCC 29096 / DSM 1053 / JCM 10044 / NBRC 100330 / Delta H) (Methanobacterium thermoautotrophicum).